A 78-amino-acid polypeptide reads, in one-letter code: MLPIIEFCISNLASGSYKAMEMLEKDPNLDIIEYSCLSYCTRCAETLFALVNGEFVSGETPEQLVENIYRHLEENPMF.

The protein belongs to the UPF0349 family.

The chain is UPF0349 protein GK2958 from Geobacillus kaustophilus (strain HTA426).